Reading from the N-terminus, the 274-residue chain is MRKIAIYGKGGIGKSTTTQNTVAGLAEMGKKVMVVGCDPKADSTRLLLHGLAQKTVLDTLREEGEDVELDDILKEGYGGTMCTESGGPEPGVGCAGRGIITSINLLEQLGAYEEDKKLDYVFYDVLGDVVCGGFAMPIRDGKAEEIYIVCSGEMMAMYAANNICKGIVKYADTGGVRLGGIICNSRKVDFEKEMIEELCRQIGTQMIHFMPRENQVQRAEINRKTVIDYSPEHAQADEYRALAKKIDENKMLVIPKPLEIAQLEKLLVDFGIAN.

8–15 (GKGGIGKS) provides a ligand contact to ATP. Cys94 lines the [4Fe-4S] cluster pocket. Arg97 is modified (ADP-ribosylarginine; by dinitrogenase reductase ADP-ribosyltransferase). Cys131 lines the [4Fe-4S] cluster pocket.

This sequence belongs to the NifH/BchL/ChlL family. In terms of assembly, homodimer. [4Fe-4S] cluster is required as a cofactor. In terms of processing, the reversible ADP-ribosylation of Arg-97 inactivates the nitrogenase reductase and regulates nitrogenase activity.

The catalysed reaction is N2 + 8 reduced [2Fe-2S]-[ferredoxin] + 16 ATP + 16 H2O = H2 + 8 oxidized [2Fe-2S]-[ferredoxin] + 2 NH4(+) + 16 ADP + 16 phosphate + 6 H(+). The key enzymatic reactions in nitrogen fixation are catalyzed by the nitrogenase complex, which has 2 components: the iron protein and the molybdenum-iron protein. The sequence is that of Nitrogenase iron protein from Solidesulfovibrio magneticus (strain ATCC 700980 / DSM 13731 / RS-1) (Desulfovibrio magneticus).